Consider the following 295-residue polypeptide: F-box only protein 8 (295 aa).

The 46-residue stretch at 35-80 folds into the F-box domain; that stretch reads TWVARYIPQDLLIEILTRLPPKSVMRFKCVSKFWSSLLSSRYFCNR.

The sequence is that of F-box only protein 8 (FBX8) from Arabidopsis thaliana (Mouse-ear cress).